We begin with the raw amino-acid sequence, 758 residues long: Ribosomal RNA processing protein 1 homolog B (758 aa).

Residue Ser-245 is modified to Phosphoserine. Positions 259 to 272 are enriched in basic residues; that stretch reads AVSKKKTALGKNHS. A disordered region spans residues 259–285; that stretch reads AVSKKKTALGKNHSRKDGLSDERGRDD. The segment covering 273–285 has biased composition (basic and acidic residues); it reads RKDGLSDERGRDD. 4 positions are modified to phosphoserine: Ser-350, Ser-392, Ser-394, and Ser-395. Residues 381–598 form a disordered region; it reads GSRVFCVEEE…KTASLKKRKK (218 aa). Over residues 397–408 the composition is skewed to basic residues; sequence QKRRRKKKKKHH. Residues 447 to 457 are compositionally biased toward low complexity; the sequence is GAEATSSTGEE. Phosphoserine is present on residues Ser-452 and Ser-458. Residues 469-481 are compositionally biased toward basic residues; it reads HNKRKRPRKKSPR. Low complexity predominate over residues 498 to 513; the sequence is SQSGPSGSHPQGPRGS. Phosphoserine is present on Ser-513. Residues 566 to 575 are compositionally biased toward basic residues; it reads QRRRLQKKKA. Ser-579 is modified (phosphoserine). Lys-652 carries the post-translational modification N6-acetyllysine. Residues 660–681 form a disordered region; it reads KSSTATHPPGPAVQLNKTPSSS. Ser-702 and Ser-706 each carry phosphoserine. Residues 707 to 758 are disordered; it reads PTGPSRVAFDPEQKPLHGVLKTPTSSPASSPLVAKKPLTTTPRRRPRAMDFF. At Arg-712 the chain carries Citrulline. Residue Thr-728 is modified to Phosphothreonine. A phosphoserine mark is found at Ser-732, Ser-735, and Ser-736.

The protein belongs to the RRP1 family. Interacts with the transcriptional activator E2F1. Interacts with serine/threonine-protein phosphatase PP1 subunits PPP1CB and PPP1CC but not with PPP1CA. Interacts with 60S ribosomal proteins RPL5 and RPL27, ribosomal processing protein RRP1/NNP1 and other nucleolar proteins including NOP2/NOL1 and FBL. Also interacts with nucleolar protein NPM1/B23. Interacts with splicing factor SRSF1 and with LUC7L3/CROP. Interacts with GTPase activator SIPA1. Interacts with CBX5/HP1alpha, H1-10, NCL, PARP1, TRIM28 and YBX3. As to quaternary structure, (Microbial infection) Interacts with influenza A virus nucleoprotein NP and with RNA-directed RNA polymerase subunits PB1 and PB2. Post-translationally, citrullinated by PADI4.

The protein resides in the nucleus. Its subcellular location is the nucleolus. It is found in the nucleoplasm. It localises to the chromosome. Functionally, positively regulates DNA damage-induced apoptosis by acting as a transcriptional coactivator of proapoptotic target genes of the transcriptional activator E2F1. Likely to play a role in ribosome biogenesis by targeting serine/threonine protein phosphatase PP1 to the nucleolus. Involved in regulation of mRNA splicing. Inhibits SIPA1 GTPase activity. Involved in regulating expression of extracellular matrix genes. Associates with chromatin and may play a role in modulating chromatin structure. (Microbial infection) Following influenza A virus (IAV) infection, promotes viral mRNA transcription by facilitating the binding of IAV RNA-directed RNA polymerase to capped mRNA. This is Ribosomal RNA processing protein 1 homolog B (RRP1B) from Homo sapiens (Human).